The primary structure comprises 61 residues: MQPRTQPLAQTLPFFLGGAPRDTGLRVPVIKMGTGWEGFQRTLKEVAYILLCCWCIKELLD.

Restricted to lens epithelial cells.

Its function is as follows. May play a role in lens epithelial cell differentiation. This chain is Lens epithelial cell protein LEP503 (LENEP), found in Homo sapiens (Human).